The sequence spans 492 residues: Trypanothione reductase (492 aa).

36-52 is a binding site for FAD; that stretch reads DVQMVHGPPFFSALGGT. Residues Cys53 and Cys58 are joined by a disulfide bond. His461 serves as the catalytic Proton acceptor.

It belongs to the class-I pyridine nucleotide-disulfide oxidoreductase family. As to quaternary structure, homodimer. It depends on FAD as a cofactor.

It is found in the cytoplasm. The enzyme catalyses trypanothione + NADP(+) = trypanothione disulfide + NADPH + H(+). Trypanothione is the parasite analog of glutathione; this enzyme is the equivalent of glutathione reductase. This is Trypanothione reductase (TPR) from Trypanosoma cruzi.